A 282-amino-acid chain; its full sequence is Bifunctional protein FolD (282 aa).

NADP(+) is bound by residues 167-169 (GRS) and serine 192.

It belongs to the tetrahydrofolate dehydrogenase/cyclohydrolase family. In terms of assembly, homodimer.

It carries out the reaction (6R)-5,10-methylene-5,6,7,8-tetrahydrofolate + NADP(+) = (6R)-5,10-methenyltetrahydrofolate + NADPH. It catalyses the reaction (6R)-5,10-methenyltetrahydrofolate + H2O = (6R)-10-formyltetrahydrofolate + H(+). Its pathway is one-carbon metabolism; tetrahydrofolate interconversion. Catalyzes the oxidation of 5,10-methylenetetrahydrofolate to 5,10-methenyltetrahydrofolate and then the hydrolysis of 5,10-methenyltetrahydrofolate to 10-formyltetrahydrofolate. The polypeptide is Bifunctional protein FolD (Acidobacterium capsulatum (strain ATCC 51196 / DSM 11244 / BCRC 80197 / JCM 7670 / NBRC 15755 / NCIMB 13165 / 161)).